The chain runs to 414 residues: Dual-specificity RNA methyltransferase RlmN (414 aa).

The Proton acceptor role is filled by E127. A Radical SAM core domain is found at 133 to 380; sequence GEGRGTLCVS…SPIRMPRGRD (248 aa). C140 and C385 are oxidised to a cystine. Residues C147, C151, and C154 each coordinate [4Fe-4S] cluster. Residues 211–212, S243, 265–267, and N342 contribute to the S-adenosyl-L-methionine site; these read GE and SLH. C385 serves as the catalytic S-methylcysteine intermediate.

The protein belongs to the radical SAM superfamily. RlmN family. [4Fe-4S] cluster serves as cofactor.

Its subcellular location is the cytoplasm. It catalyses the reaction adenosine(2503) in 23S rRNA + 2 reduced [2Fe-2S]-[ferredoxin] + 2 S-adenosyl-L-methionine = 2-methyladenosine(2503) in 23S rRNA + 5'-deoxyadenosine + L-methionine + 2 oxidized [2Fe-2S]-[ferredoxin] + S-adenosyl-L-homocysteine. It carries out the reaction adenosine(37) in tRNA + 2 reduced [2Fe-2S]-[ferredoxin] + 2 S-adenosyl-L-methionine = 2-methyladenosine(37) in tRNA + 5'-deoxyadenosine + L-methionine + 2 oxidized [2Fe-2S]-[ferredoxin] + S-adenosyl-L-homocysteine. Specifically methylates position 2 of adenine 2503 in 23S rRNA and position 2 of adenine 37 in tRNAs. m2A2503 modification seems to play a crucial role in the proofreading step occurring at the peptidyl transferase center and thus would serve to optimize ribosomal fidelity. The protein is Dual-specificity RNA methyltransferase RlmN of Bartonella bacilliformis (strain ATCC 35685 / KC583 / Herrer 020/F12,63).